Reading from the N-terminus, the 259-residue chain is Imidazole glycerol phosphate synthase subunit HisF (259 aa).

Catalysis depends on residues Asp-11 and Asp-130.

Belongs to the HisA/HisF family. As to quaternary structure, heterodimer of HisH and HisF.

It is found in the cytoplasm. It carries out the reaction 5-[(5-phospho-1-deoxy-D-ribulos-1-ylimino)methylamino]-1-(5-phospho-beta-D-ribosyl)imidazole-4-carboxamide + L-glutamine = D-erythro-1-(imidazol-4-yl)glycerol 3-phosphate + 5-amino-1-(5-phospho-beta-D-ribosyl)imidazole-4-carboxamide + L-glutamate + H(+). Its pathway is amino-acid biosynthesis; L-histidine biosynthesis; L-histidine from 5-phospho-alpha-D-ribose 1-diphosphate: step 5/9. IGPS catalyzes the conversion of PRFAR and glutamine to IGP, AICAR and glutamate. The HisF subunit catalyzes the cyclization activity that produces IGP and AICAR from PRFAR using the ammonia provided by the HisH subunit. In Desulfovibrio desulfuricans (strain ATCC 27774 / DSM 6949 / MB), this protein is Imidazole glycerol phosphate synthase subunit HisF.